The chain runs to 210 residues: Selenoprotein T2 (210 aa).

A signal peptide spans 1 to 21 (MAEYSQTGILTALLLFTVVTV). The cysteinyl-selenocysteine (Cys-Sec) cross-link spans 62 to 65 (CISU). A non-standard amino acid (selenocysteine) is located at residue U65.

It belongs to the SelWTH family. Selenoprotein T subfamily. Post-translationally, may contain a selenide-sulfide bond between Cys-62 and Sec-65. This bond is speculated to serve as redox-active pair. In terms of tissue distribution, widely expressed in the embryo.

The chain is Selenoprotein T2 from Danio rerio (Zebrafish).